The following is a 510-amino-acid chain: D-alanine--D-alanyl carrier protein ligase (510 aa).

ATP is bound at residue 157 to 158 (TS). Position 202 (D202) interacts with D-alanine. An ATP-binding site is contributed by 297 to 302 (NTYGPT). V306 lines the D-alanine pocket. D389 and K498 together coordinate ATP. Residue K498 coordinates D-alanine.

This sequence belongs to the ATP-dependent AMP-binding enzyme family. DltA subfamily.

The protein resides in the cytoplasm. The catalysed reaction is holo-[D-alanyl-carrier protein] + D-alanine + ATP = D-alanyl-[D-alanyl-carrier protein] + AMP + diphosphate. It functions in the pathway cell wall biogenesis; lipoteichoic acid biosynthesis. Its function is as follows. Catalyzes the first step in the D-alanylation of lipoteichoic acid (LTA), the activation of D-alanine and its transfer onto the D-alanyl carrier protein (Dcp) DltC. In an ATP-dependent two-step reaction, forms a high energy D-alanyl-AMP intermediate, followed by transfer of the D-alanyl residue as a thiol ester to the phosphopantheinyl prosthetic group of the Dcp. D-alanylation of LTA plays an important role in modulating the properties of the cell wall in Gram-positive bacteria, influencing the net charge of the cell wall. The polypeptide is D-alanine--D-alanyl carrier protein ligase (Listeria monocytogenes serotype 4b (strain F2365)).